The primary structure comprises 969 residues: Liprin-beta-1 (969 aa).

Ser-37 carries the post-translational modification Phosphoserine. At Thr-39 the chain carries Phosphothreonine. The residue at position 40 (Ser-40) is a Phosphoserine. The stretch at 99–310 (GDVYQERLAR…CLSRYRKMQD (212 aa)) forms a coiled coil. Residue Lys-291 is modified to N6-acetyllysine. Disordered stretches follow at residues 342–361 (DLER…RDLL), 381–407 (LLPP…FEEG), and 424–482 (GVST…RKAR). Positions 346–358 (STSSTPGMGSPSR) are enriched in low complexity. Ser-403 and Ser-435 each carry phosphoserine. A compositionally biased stretch (low complexity) spans 426–438 (STSSLQKSSSLGN). The span at 439–452 (LKKEASDGTDKAPT) shows a compositional bias: basic and acidic residues. A Glycyl lysine isopeptide (Lys-Gly) (interchain with G-Cter in SUMO2) cross-link involves residue Lys-440. The residue at position 500 (Ser-500) is a Phosphoserine. Polar residues predominate over residues 518–529 (AGTSRSKGSQGT). Residues 518–593 (AGTSRSKGSQ…PRLGWSRDLG (76 aa)) are disordered. Ser-538 is subject to Phosphoserine. Residues 543–557 (KKSRGIMRLFGKLRR) are compositionally biased toward basic residues. Phosphoserine is present on residues Ser-560 and Ser-595. 2 SAM domains span residues 606-670 (WTKE…LGSE) and 678-741 (LDFN…LRIN). Ser-753 and Ser-757 each carry phosphoserine. The region spanning 763–835 (VQQWTNHRVM…ATHFNLLIGA (73 aa)) is the SAM 3 domain. A phosphoserine mark is found at Ser-957, Ser-959, and Ser-961. The residue at position 963 (Thr-963) is a Phosphothreonine.

It belongs to the liprin family. Liprin-beta subfamily. In terms of assembly, forms homodimers and heterodimers. Interacts with S100A4 in a Ca(2+)-dependent mode. Part of a cortical microtubule stabilization complex (CMSC) composed of KANK1, PPFIA1, PPFIBP1, ERC1/ELKS, PHLDB2/LL5beta, CLASPs, KIF21A and possibly additional interactors; within CMSCs KANK1 and PHLDB2/LL5beta seem to be the core components for recruiting microtubule-binding proteins KIF21A and CLASPs, whereas PPFIA1, PPFIBP1 and ERC1/ELKS serve as scaffolds for protein clustering. Interacts with KANK1 (via CC1 domain, residues 244-339).

It is found in the cytoplasm. The protein localises to the cell cortex. Its function is as follows. May regulate the disassembly of focal adhesions. Did not bind receptor-like tyrosine phosphatases type 2A. This chain is Liprin-beta-1 (Ppfibp1), found in Mus musculus (Mouse).